A 245-amino-acid polypeptide reads, in one-letter code: Enolase-phosphatase E1 (245 aa).

Positions 14 and 16 each coordinate Mg(2+). Substrate-binding positions include 141-142 (SS) and K175. D200 contacts Mg(2+).

The protein belongs to the HAD-like hydrolase superfamily. MasA/MtnC family. Monomer. Mg(2+) is required as a cofactor.

Its subcellular location is the cytoplasm. It localises to the nucleus. The enzyme catalyses 5-methylsulfanyl-2,3-dioxopentyl phosphate + H2O = 1,2-dihydroxy-5-(methylsulfanyl)pent-1-en-3-one + phosphate. Its pathway is amino-acid biosynthesis; L-methionine biosynthesis via salvage pathway; L-methionine from S-methyl-5-thio-alpha-D-ribose 1-phosphate: step 3/6. The protein operates within amino-acid biosynthesis; L-methionine biosynthesis via salvage pathway; L-methionine from S-methyl-5-thio-alpha-D-ribose 1-phosphate: step 4/6. Functionally, bifunctional enzyme that catalyzes the enolization of 2,3-diketo-5-methylthiopentyl-1-phosphate (DK-MTP-1-P) into the intermediate 2-hydroxy-3-keto-5-methylthiopentenyl-1-phosphate (HK-MTPenyl-1-P), which is then dephosphorylated to form the acireductone 1,2-dihydroxy-3-keto-5-methylthiopentene (DHK-MTPene). This is Enolase-phosphatase E1 from Drosophila grimshawi (Hawaiian fruit fly).